We begin with the raw amino-acid sequence, 722 residues long: Catalase B (722 aa).

An N-terminal signal peptide occupies residues 1–15; that stretch reads MRALGLVGLVGVANA. Residues H100 and N173 contribute to the active site. Y388 is a heme binding site.

This sequence belongs to the catalase family. It depends on heme as a cofactor.

It localises to the secreted. The enzyme catalyses 2 H2O2 = O2 + 2 H2O. In terms of biological role, occurs in almost all aerobically respiring organisms and serves to protect cells from the toxic effects of hydrogen peroxide. The chain is Catalase B (catB) from Emericella nidulans (strain FGSC A4 / ATCC 38163 / CBS 112.46 / NRRL 194 / M139) (Aspergillus nidulans).